The primary structure comprises 709 residues: Probable serine/threonine-protein kinase zyg-1 (709 aa).

Residues Phe13–Val251 enclose the Protein kinase domain. ATP is bound by residues Ile19 to Val27 and Lys41. Catalysis depends on Asp130, which acts as the Proton acceptor. Disordered stretches follow at residues Lys254–Arg329 and Ser591–Thr633. 2 stretches are compositionally biased toward basic and acidic residues: residues Ser262–Pro291 and Ser302–His313. Residues Pro607–Asn627 are compositionally biased toward polar residues.

It belongs to the protein kinase superfamily. Ser/Thr protein kinase family.

It is found in the cytoplasm. Its subcellular location is the cytoskeleton. The protein resides in the microtubule organizing center. The protein localises to the centrosome. It localises to the centriole. The enzyme catalyses L-seryl-[protein] + ATP = O-phospho-L-seryl-[protein] + ADP + H(+). It catalyses the reaction L-threonyl-[protein] + ATP = O-phospho-L-threonyl-[protein] + ADP + H(+). In terms of biological role, protein kinase that plays a central role in centrosome duplication. Paternal copy is required to regulate synthesis of daughter centrioles prior to fertilization. Maternal copy regulates centrosome duplication during later cell cycles. Functions upstream of sas-5 and sas-6, and is required for their localization to the centrosome. The chain is Probable serine/threonine-protein kinase zyg-1 (zyg-1) from Caenorhabditis briggsae.